We begin with the raw amino-acid sequence, 711 residues long: Choline transporter-like protein 2 (711 aa).

The Cytoplasmic portion of the chain corresponds to 1–33 (MGDERPHYYGKHGTPQKYDPTFKGPIYNRGCTD). Residue Thr-14 is modified to Phosphothreonine. Residues 34 to 54 (VICCVFLLVAIVGYVAVGIIA) traverse the membrane as a helical segment. The Extracellular segment spans residues 55–232 (WTHGDPRKVI…RIFEDYTVSW (178 aa)). 2 N-linked (GlcNAc...) asparagine glycosylation sites follow: Asn-187 and Asn-200. Residues 233–253 (YWIIIGLVIAMAMSLLFIILL) traverse the membrane as a helical segment. Residues 254 to 256 (RFL) lie on the Cytoplasmic side of the membrane. Residues 257–277 (AGIMVWVMIIMVILVLGYGIF) traverse the membrane as a helical segment. The Extracellular portion of the chain corresponds to 278 to 315 (HCYMEYSRLRGEAGSDVSLVDLGFQTDFRVYLHLRQTW). A helical transmembrane segment spans residues 316 to 336 (LAFMIILSILEVIIILLLIFL). The Cytoplasmic segment spans residues 337-364 (RKRILIAIALIKEASRAVGYVMCTMLYP). The chain crosses the membrane as a helical span at residues 365-385 (LVTFFLLCLCIAYWASTAVFL). The Extracellular segment spans residues 386 to 440 (STSNEAVYKIFDDGLCPFTAKTCNPETFPSSNESRQCPNARCQFAFYGGESGYHR). N-linked (GlcNAc...) asparagine glycosylation occurs at Asn-417. The chain crosses the membrane as a helical span at residues 441–461 (ALLGLQIFNAFMFFWLANFVL). Topologically, residues 462–504 (ALGQVTLAGAFASYYWALRKPDDLPAFPLFSAFGRALRYHTGS) are cytoplasmic. The chain crosses the membrane as a helical span at residues 505 to 525 (LAFGALILAIVQIIRVILEYL). Topologically, residues 526–563 (DQRLKAAENKFAKCLMTCLKCCFWCLEKFIKFLNRNAY) are extracellular. A helical membrane pass occupies residues 564–584 (IMIAIYGTNFCTSARNAFFLL). At 585-599 (MRNIIRVAVLDKVTD) the chain is on the cytoplasmic side. The chain crosses the membrane as a helical span at residues 600-620 (FLFLLGKLLIVGSVGILAFFF). Residues 621–638 (FTHRIRIVQDTAPPLNYY) are Extracellular-facing. A helical transmembrane segment spans residues 639 to 659 (WVPILTVIVGSYLIAHGFFSV). At 660–711 (YGMCVDTLFLCFCEDLERNDGSQERPYFMSPELRDILLKGSAEEGKRAEAEE) the chain is on the cytoplasmic side.

This sequence belongs to the CTL (choline transporter-like) family. In terms of assembly, interacts with COCH. N-glycosylated.

The protein resides in the cell membrane. Its subcellular location is the mitochondrion outer membrane. The enzyme catalyses choline(out) + n H(+)(in) = choline(in) + n H(+)(out). It carries out the reaction ethanolamine(out) + n H(+)(in) = ethanolamine(in) + n H(+)(out). In terms of biological role, choline/H+ antiporter, mainly in mitochodria. Also acts as a low-affinity ethanolamine/H+ antiporter, regulating the supply of extracellular ethanolamine (Etn) for the CDP-Etn pathway, redistribute intracellular Etn and balance the CDP-Cho and CDP-Etn arms of the Kennedy pathway. This is Choline transporter-like protein 2 (SLC44A2) from Pongo abelii (Sumatran orangutan).